Consider the following 289-residue polypeptide: Rhodopsin (289 aa).

The Extracellular segment spans residues 1-7 (YLVSPAA). Residues 8–32 (YAALGAYMFLLILVGFPVNFLTLYV) form a helical membrane-spanning segment. Residues 33-44 (TLDHKKLRTPLN) lie on the Cytoplasmic side of the membrane. The chain crosses the membrane as a helical span at residues 45–67 (YILLNLAVADLFMVLGGFTTTMY). Over 68-81 (TSMHGYFVLGRLGC) the chain is Extracellular. Cysteine 81 and cysteine 158 are joined by a disulfide. The helical transmembrane segment at 82-104 (NLEGFFATLGGEIALWSLVVLAI) threads the bilayer. The short motif at 105–107 (ERW) is the 'Ionic lock' involved in activated form stabilization element. Residues 105–123 (ERWIVVCKPISNFRFTEDH) are Cytoplasmic-facing. Residues 124-144 (AIMGLAFSWVMALTCAVPPLV) traverse the membrane as a helical segment. The Extracellular segment spans residues 145–173 (GWSRYIPEGMQCSCGVDYYTRAEGFNTES). The helical transmembrane segment at 174-195 (FVLYMFTVHFLIPLSVIFFCYG) threads the bilayer. At 196–223 (RLLCAVKEAAAAQQESETTQRAEKEVSR) the chain is on the cytoplasmic side. The chain crosses the membrane as a helical span at residues 224 to 245 (MVVLMVIGFLVCWLPYASVAWW). Residues 246–257 (IFCNQGSEFGPI) are Extracellular-facing. A helical membrane pass occupies residues 258-279 (FMTLPAFFAKTSAIYNPLIYIC). Lysine 267 bears the N6-(retinylidene)lysine mark. The Cytoplasmic segment spans residues 280-289 (MNKQFRHCMI).

It belongs to the G-protein coupled receptor 1 family. Opsin subfamily. In terms of processing, phosphorylated on some or all of the serine and threonine residues present in the C-terminal region. Contains one covalently linked retinal chromophore.

The protein resides in the membrane. Its subcellular location is the cell projection. It is found in the cilium. It localises to the photoreceptor outer segment. Functionally, photoreceptor required for image-forming vision at low light intensity. While most salt water fish species use retinal as chromophore, most freshwater fish use 3-dehydroretinal, or a mixture of retinal and 3-dehydroretinal. Light-induced isomerization of 11-cis to all-trans retinal triggers a conformational change that activates signaling via G-proteins. Subsequent receptor phosphorylation mediates displacement of the bound G-protein alpha subunit by arrestin and terminates signaling. The sequence is that of Rhodopsin (rho) from Procottus jeittelesii (Red sculpin).